Here is a 431-residue protein sequence, read N- to C-terminus: Nuclear receptor subfamily 1 group I member 2 (431 aa).

2 NR C4-type zinc fingers span residues 38–58 and 74–99; these read CRVCGDKANGYHFNVMTCEGC and CPFRKGTCEITRKTRRQCQACRLRKC. The nuclear receptor DNA-binding region spans 38–104; the sequence is CRVCGDKANG…RLRKCLESGM (67 aa). The Bipartite nuclear localization signal motif lies at 63–89; the sequence is RRAMKRNVRLRCPFRKGTCEITRKTRR. Residues 105–142 form a hinge region; it reads KKEMIMSDAAVEQRRALIKRKKREKIEAPPPGGQGLTE. The 288-residue stretch at 143-430 folds into the NR LBD domain; sequence EQQALIQELM…LMQELFSSTD (288 aa). Residues Ser244 and 282-285 each bind hyperforin; that span reads ILRF.

The protein belongs to the nuclear hormone receptor family. NR1 subfamily. In terms of assembly, heterodimer with RXRA. Interacts with NCOA1. Interacts (via domain NR LBD) with CRY1 and CRY2 in a ligand-dependent manner.

The protein resides in the nucleus. Functionally, nuclear receptor that binds and is activated by a variety of endogenous and xenobiotic compounds. Transcription factor that activates the transcription of multiple genes involved in the metabolism and secretion of potentially harmful xenobiotics, endogenous compounds and drugs. Response to specific ligands is species-specific, due to differences in the ligand-binding domain. Activated by naturally occurring steroids, such as pregnenolone and progesterone. Binds to a response element in the promoters of the CYP3A4 and ABCB1/MDR1 genes. This Rattus norvegicus (Rat) protein is Nuclear receptor subfamily 1 group I member 2 (Nr1i2).